Consider the following 510-residue polypeptide: Probable cytosol aminopeptidase (510 aa).

Residues Lys272 and Asp277 each contribute to the Mn(2+) site. Lys284 is a catalytic residue. Residues Asp296, Asp355, and Glu357 each contribute to the Mn(2+) site. The active site involves Arg359.

Belongs to the peptidase M17 family. Mn(2+) serves as cofactor.

It localises to the cytoplasm. It catalyses the reaction Release of an N-terminal amino acid, Xaa-|-Yaa-, in which Xaa is preferably Leu, but may be other amino acids including Pro although not Arg or Lys, and Yaa may be Pro. Amino acid amides and methyl esters are also readily hydrolyzed, but rates on arylamides are exceedingly low.. It carries out the reaction Release of an N-terminal amino acid, preferentially leucine, but not glutamic or aspartic acids.. In terms of biological role, presumably involved in the processing and regular turnover of intracellular proteins. Catalyzes the removal of unsubstituted N-terminal amino acids from various peptides. The sequence is that of Probable cytosol aminopeptidase from Synechococcus sp. (strain JA-2-3B'a(2-13)) (Cyanobacteria bacterium Yellowstone B-Prime).